A 196-amino-acid chain; its full sequence is Imidazoleglycerol-phosphate dehydratase (196 aa).

Belongs to the imidazoleglycerol-phosphate dehydratase family.

The protein resides in the cytoplasm. The enzyme catalyses D-erythro-1-(imidazol-4-yl)glycerol 3-phosphate = 3-(imidazol-4-yl)-2-oxopropyl phosphate + H2O. It participates in amino-acid biosynthesis; L-histidine biosynthesis; L-histidine from 5-phospho-alpha-D-ribose 1-diphosphate: step 6/9. The polypeptide is Imidazoleglycerol-phosphate dehydratase (Lachnoclostridium phytofermentans (strain ATCC 700394 / DSM 18823 / ISDg) (Clostridium phytofermentans)).